We begin with the raw amino-acid sequence, 369 residues long: Serine/threonine-protein acetyltransferase HopZ1a (369 aa).

Positions 1-46 (MGNVCVGGSRMSHQVYSPDRADTPPRSERNTPDRRQRAAGDAERTQ) are disordered. Over residues 19 to 46 (DRADTPPRSERNTPDRRQRAAGDAERTQ) the composition is skewed to basic and acidic residues. 3 residues coordinate 1D-myo-inositol hexakisphosphate: Arg-49, Lys-53, and Arg-106. Active-site residues include His-150 and Glu-170. His-150 is a CoA binding site. Residues Ala-177 and 211 to 212 (KT) each bind CoA. Residue Cys-216 is part of the active site. 1D-myo-inositol hexakisphosphate is bound by residues Asn-222, 226 to 229 (KAHK), and 289 to 290 (KH). N6-acetyllysine; by autocatalysis is present on Lys-289. 292–295 (ASLT) is a binding site for CoA. Residues 314 to 317 (SEGH) and Arg-326 each bind 1D-myo-inositol hexakisphosphate. CoA is bound by residues 331-334 (RVKR) and 344-348 (SNTQF). 1D-myo-inositol hexakisphosphate is bound by residues Gln-358 and Arg-362.

Belongs to the acetyltransferase YopJ family. In terms of assembly, interacts with host plant JAZ proteins (e.g. Glycine max JAZ1 and Arabidospis thaliana TIFY10B/JAZ2, TIFY11A/JAZ5, TIFY11B/JAZ6, TIFY5A/JAZ8 and TIFY3B/JAZ12) and triggers their degradation. Binds directly to SZE1 and SZE2 at the host plasma membrane; this interaction with a complex made of, at least, SZE1, BKN2/SZE2, ZAR1 and ZED1 triggers host immunity. The cofactor is 1D-myo-inositol hexakisphosphate. Autoacetylated at Lys-289; while autoacetylation at Lys-289 is required for virulence function to some extent, it is not essential.

It is found in the secreted. The protein localises to the host cell membrane. Its subcellular location is the host cytoplasm. It localises to the host cytoskeleton. The protein resides in the host nucleus. The catalysed reaction is L-threonyl-[protein] + acetyl-CoA = O-acetyl-L-threonyl-[protein] + CoA. It carries out the reaction L-seryl-[protein] + acetyl-CoA = O-acetyl-L-seryl-[protein] + CoA. It catalyses the reaction L-lysyl-[protein] + acetyl-CoA = N(6)-acetyl-L-lysyl-[protein] + CoA + H(+). Its activity is regulated as follows. 1D-myo-inositol hexakisphosphate activates protein-acetyltransferase activity via an allosteric mechanism: 1D-myo-inositol hexakisphosphate-binding induces a conformational rearrangement that stimulates the interaction with acetyl-CoA. Acetyltransferase activity is activated by phytic acid. In terms of biological role, serine/threonine-protein acetyltransferase translocated into infected cells, which impairs host microtubule network and host immunity by mediating acetylation of target proteins. Blocks secretion in host cells by mediating acetylation of host tubulin, thereby impairing host microbubule network. Impairs host cell immunity by mediating acetylation of host TIFY/JAZ transcription repressors (Arabidopsis thaliana TIFY10B/JAZ2, TIFY11A/JAZ5, TIFY11B/JAZ6, TIFY5A/JAZ8, TIFY9/JAZ10 and TIFY3B/JAZ12), thereby activating host jasmonate signaling. This is Serine/threonine-protein acetyltransferase HopZ1a from Pseudomonas syringae pv. syringae.